The primary structure comprises 113 residues: Translation initiation factor IF-1, chloroplastic (113 aa).

Positions 8–83 (REKKNPREAK…SKGRIIYRLP (76 aa)) constitute an S1-like domain. Residues 86 to 113 (DSKRIEDSKDSEDLKDSEDLKDTKDSKD) form a disordered region.

This sequence belongs to the IF-1 family. Component of the 30S ribosomal translation pre-initiation complex which assembles on the 30S ribosome in the order IF-2 and IF-3, IF-1 and N-formylmethionyl-tRNA(fMet); mRNA recruitment can occur at any time during PIC assembly.

It localises to the plastid. Its subcellular location is the chloroplast. In terms of biological role, one of the essential components for the initiation of protein synthesis. Stabilizes the binding of IF-2 and IF-3 on the 30S subunit to which N-formylmethionyl-tRNA(fMet) subsequently binds. Helps modulate mRNA selection, yielding the 30S pre-initiation complex (PIC). Upon addition of the 50S ribosomal subunit IF-1, IF-2 and IF-3 are released leaving the mature 70S translation initiation complex. The sequence is that of Translation initiation factor IF-1, chloroplastic from Hordeum vulgare (Barley).